Reading from the N-terminus, the 351-residue chain is MAVTSLLDTVFRRRKKKSTEFISFFEFDLDTIKAATNDFSELVGRGGFGFVYKGRLQNGQEIAVKILSTSSIRTERQFHNELIILSKLKHKNLINLLGFCTKRDQHGLVYEFMPNSSLDCFILDPHRAAQLNWEMCRNIIDGIARGLRYLHEESGLWVVHRDIKPGNILLDSDLKPKIVGFELARTMQQGENAAETTEIVGTVGYLDPEYIRSGRVSVKSDVYAFGVTILTIISRRKAWSVDGDSLIKYVRRCWNRGEAIDVIHEVMREEEREYSISEILRYIHIALLCVDENAERRPNIDKVLHWFSCFSTPLPDPTFGNRFLVEEETNWPWSPSLSPGHSSVTSPISSR.

A Protein kinase domain is found at 37-287 (NDFSELVGRG…EILRYIHIAL (251 aa)). ATP is bound by residues 43–51 (VGRGGFGFV) and Lys-65. Tyr-110 carries the post-translational modification Phosphotyrosine. Catalysis depends on Asp-162, which acts as the Proton acceptor. A phosphothreonine mark is found at Thr-197 and Thr-202. At Tyr-210 the chain carries Phosphotyrosine.

The protein belongs to the protein kinase superfamily. Ser/Thr protein kinase family. CRK subfamily. As to quaternary structure, interacts with CRK36. Autophosphorylated and phosphorylated by CRK36.

The protein localises to the cytoplasm. Its subcellular location is the cytosol. It catalyses the reaction L-seryl-[protein] + ATP = O-phospho-L-seryl-[protein] + ADP + H(+). The enzyme catalyses L-threonyl-[protein] + ATP = O-phospho-L-threonyl-[protein] + ADP + H(+). Functionally, forms a complex with CRK36 that may negatively control abscisic acid (ABA) and osmotic stress signal transduction. Involved in plant response to ABA during seed germination, early seedling growth and responses to abiotic stresses by inducing the expression of ABA-responsive genes and stress-inducible genes. Acts as a positive regulator in disease resistance, downstream of NPR1 and WRKY70. The chain is Cysteine-rich receptor-like protein kinase 45 from Arabidopsis thaliana (Mouse-ear cress).